A 333-amino-acid polypeptide reads, in one-letter code: Ketol-acid reductoisomerase (NADP(+)) (333 aa).

One can recognise a KARI N-terminal Rossmann domain in the interval 2–182 (ANIYYDDSCD…GGGRAGILET (181 aa)). Residues 25–28 (YGSQ), Arg-48, Ser-51, Ser-53, and 83–86 (DTIQ) contribute to the NADP(+) site. Residue His-108 is part of the active site. Gly-134 provides a ligand contact to NADP(+). Positions 183–331 (SFREETETDL…TKLRSMMKWL (149 aa)) constitute a KARI C-terminal knotted domain. The Mg(2+) site is built by Asp-191, Glu-195, Glu-227, and Glu-231. Ser-252 contributes to the substrate binding site.

This sequence belongs to the ketol-acid reductoisomerase family. Mg(2+) serves as cofactor.

It carries out the reaction (2R)-2,3-dihydroxy-3-methylbutanoate + NADP(+) = (2S)-2-acetolactate + NADPH + H(+). The enzyme catalyses (2R,3R)-2,3-dihydroxy-3-methylpentanoate + NADP(+) = (S)-2-ethyl-2-hydroxy-3-oxobutanoate + NADPH + H(+). It functions in the pathway amino-acid biosynthesis; L-isoleucine biosynthesis; L-isoleucine from 2-oxobutanoate: step 2/4. It participates in amino-acid biosynthesis; L-valine biosynthesis; L-valine from pyruvate: step 2/4. Functionally, involved in the biosynthesis of branched-chain amino acids (BCAA). Catalyzes an alkyl-migration followed by a ketol-acid reduction of (S)-2-acetolactate (S2AL) to yield (R)-2,3-dihydroxy-isovalerate. In the isomerase reaction, S2AL is rearranged via a Mg-dependent methyl migration to produce 3-hydroxy-3-methyl-2-ketobutyrate (HMKB). In the reductase reaction, this 2-ketoacid undergoes a metal-dependent reduction by NADPH to yield (R)-2,3-dihydroxy-isovalerate. This Leptospira biflexa serovar Patoc (strain Patoc 1 / Ames) protein is Ketol-acid reductoisomerase (NADP(+)).